A 607-amino-acid chain; its full sequence is COMPASS component cclA (607 aa).

Over residues Met-1 to Pro-19 the composition is skewed to low complexity. Disordered stretches follow at residues Met-1–His-22 and Gly-34–Ala-86. Positions Ser-57–Glu-69 are enriched in basic residues. The 220-residue stretch at Ile-157–Ala-376 folds into the B30.2/SPRY domain. Residues Asn-587–Gly-607 are disordered.

It belongs to the cclA family. Component of the COMPASS complex.

It is found in the nucleus. Its subcellular location is the chromosome. It localises to the telomere. Functionally, component of the COMPASS (Set1C) complex that specifically mono-, di- and trimethylates histone H3 to form H3K4me1/2/3, which subsequently plays a role in telomere length maintenance and transcription elongation regulation. Controls the production of several secondary metabolites, including monodictyphenone, emodin and emodin derivatives, as well as two anti-osteoporosis polyketides, F9775A and F9775B. The sequence is that of COMPASS component cclA from Emericella nidulans (strain FGSC A4 / ATCC 38163 / CBS 112.46 / NRRL 194 / M139) (Aspergillus nidulans).